A 441-amino-acid chain; its full sequence is Zinc finger and BTB domain-containing protein 8A (441 aa).

Residues 24–92 (CDCSILVEGK…VYSGKLSLTG (69 aa)) enclose the BTB domain. Composition is skewed to polar residues over residues 146 to 170 (ERSSFYSSGWQDESSSPRSHLSPDQ) and 178 to 197 (KSWSKYNYHPASQRNTQQPL). Residues 146–252 (ERSSFYSSGW…SEEQAQMNAE (107 aa)) are disordered. 2 positions are modified to phosphoserine: S161 and S167. Residues K178, K182, and K199 each participate in a glycyl lysine isopeptide (Lys-Gly) (interchain with G-Cter in SUMO2) cross-link. The span at 198 to 208 (TKHEQRKDSIK) shows a compositional bias: basic and acidic residues. Residues 234-248 (SDSSSHASQSEEQAQ) are compositionally biased toward low complexity. C2H2-type zinc fingers lie at residues 282–304 (FKCPYCTHVVKRKADLKRHLRCH) and 310–333 (YPCQACGKRFSRLDHLSSHFRTIH). Residue K437 forms a Glycyl lysine isopeptide (Lys-Gly) (interchain with G-Cter in SUMO2) linkage.

It is found in the nucleus. In terms of biological role, may be involved in transcriptional regulation. The sequence is that of Zinc finger and BTB domain-containing protein 8A (ZBTB8A) from Bos taurus (Bovine).